Here is a 498-residue protein sequence, read N- to C-terminus: Glutamyl-tRNA(Gln) amidotransferase subunit A (498 aa).

Active-site charge relay system residues include K79 and S154. S178 acts as the Acyl-ester intermediate in catalysis.

It belongs to the amidase family. GatA subfamily. In terms of assembly, heterotrimer of A, B and C subunits.

The catalysed reaction is L-glutamyl-tRNA(Gln) + L-glutamine + ATP + H2O = L-glutaminyl-tRNA(Gln) + L-glutamate + ADP + phosphate + H(+). In terms of biological role, allows the formation of correctly charged Gln-tRNA(Gln) through the transamidation of misacylated Glu-tRNA(Gln) in organisms which lack glutaminyl-tRNA synthetase. The reaction takes place in the presence of glutamine and ATP through an activated gamma-phospho-Glu-tRNA(Gln). This chain is Glutamyl-tRNA(Gln) amidotransferase subunit A, found in Psychrobacter cryohalolentis (strain ATCC BAA-1226 / DSM 17306 / VKM B-2378 / K5).